We begin with the raw amino-acid sequence, 139 residues long: Tetra-peptide repeat homeobox-like protein (139 aa).

2 disordered regions span residues 1–22 (MQDPRHPQGLPLSPGLPKRQRQ) and 78–139 (ERWF…QQPQ). Positions 20-79 (QRQDRTIYNWKQQEVLENHFKEEQYPDYDTRQELAEMLNLREYQVQVWFKNRRAKRSRER) form a DNA-binding region, homeobox. Positions 82–139 (QKQLQQLQKHPQQQHPQQQHPQQQLQQQQPQQQPQQQQPQQQPQQQQPQQQQLHQQPQ) are enriched in low complexity.

It belongs to the paired homeobox family.

The protein resides in the nucleus. Functionally, transcription factor required for zygotic genome activation (ZGA), a critical event in early embryonic development during which the developmental control passes from maternally provided mRNAs to the expression of the zygotic genome after fertilization. Protein produced from maternal transcripts that binds and activates expression of key ZGA marker genes, such as NANOGNB, ZSCAN4, DUXB, KLF5 and DPPA3. Binds to regulatory DNA sequences containing a 5'-TAATCC-3' sequence motif. The protein is Tetra-peptide repeat homeobox-like protein of Homo sapiens (Human).